Consider the following 187-residue polypeptide: ECF RNA polymerase sigma factor SigK (187 aa).

The tract at residues 30–96 is sigma-70 factor domain-2; the sequence is YDHTKSRVYG…RAVDRVRCEQ (67 aa). The Interaction with polymerase core subunit RpoC motif lies at 53 to 56; sequence ETTQ. Residues 133-182 form a sigma-70 factor domain-4 region; sequence CLKALTDTQRQCIELAYYGGLTYVEVSRRLAANLSTIKSRMRDALRSLRN. Positions 155–174 form a DNA-binding region, H-T-H motif; sequence YVEVSRRLAANLSTIKSRMR.

It belongs to the sigma-70 factor family. ECF subfamily. In terms of assembly, interacts transiently with the RNA polymerase catalytic core formed by RpoA, RpoB, RpoC and RpoZ (2 alpha, 1 beta, 1 beta' and 1 omega subunit) to form the RNA polymerase holoenzyme that can initiate transcription. Interacts (via sigma-70 factor domain 4) with anti-sigma-K factor RskA.

In terms of biological role, sigma factors are initiation factors that promote the attachment of RNA polymerase to specific initiation sites and are then released. Extracytoplasmic function (ECF) sigma factors are held in an inactive form by an anti-sigma factor until released by regulated intramembrane proteolysis. This Mycobacterium tuberculosis (strain ATCC 25177 / H37Ra) protein is ECF RNA polymerase sigma factor SigK (sigK).